A 149-amino-acid chain; its full sequence is 5-hydroxytryptamine receptor 1E (149 aa).

Residues 1–6 (HQPANY) are Extracellular-facing. The helical transmembrane segment at 7-31 (LICSLAVTDLLVAVLVMPLSIMYIV) threads the bilayer. Residues 32-39 (MDSWRLGY) are Cytoplasmic-facing. The chain crosses the membrane as a helical span at residues 40 to 65 (FICEVWLSVDMTCCTCSILHLCVIAL). The cysteines at positions 42 and 120 are disulfide-linked. Serotonin-binding residues include aspartate 49 and cysteine 53. Positions 66-68 (DRY) match the DRY motif; important for ligand-induced conformation changes motif. Topologically, residues 66-85 (DRYWAITNAIEYARKRTAKR) are extracellular. A helical membrane pass occupies residues 86–104 (AGLMILTVWTISIFISMPP). Over 105–149 (LFWRSHRQLSPPPSQCAIQHDHVIYTIYSTLGAFYIPLTLILILY) the chain is Cytoplasmic.

This sequence belongs to the G-protein coupled receptor 1 family.

The protein localises to the cell membrane. G-protein coupled receptor for 5-hydroxytryptamine (serotonin). Also functions as a receptor for various alkaloids and psychoactive substances. Ligand binding causes a conformation change that triggers signaling via guanine nucleotide-binding proteins (G proteins) and modulates the activity of downstream effectors, such as adenylate cyclase. HTR1E is coupled to G(i)/G(o) G alpha proteins and mediates inhibitory neurotransmission by inhibiting adenylate cyclase activity. The chain is 5-hydroxytryptamine receptor 1E (HTR1E) from Sus scrofa (Pig).